The sequence spans 271 residues: TIP41-like protein (271 aa).

K106 is modified (N6-acetyllysine). The tract at residues 173 to 271 is interaction with PPP2CA; the sequence is RVMPSSFFLL…PVDSQSTPSE (99 aa). 2 positions are modified to phosphoserine: S265 and S270.

This sequence belongs to the TIP41 family. Interacts with PPP2CA. Interacts with PPP2CB, PPP4C and PPP6C. Interacts with IGBP1; the interaction is dependent on PPP2CA. Associates with a protein phosphatase 2A PP2A(C):IGBP1 complex. Interacts with PPP4C and PPP4R2.

Its subcellular location is the cytoplasm. Its function is as follows. May be a allosteric regulator of serine/threonine-protein phosphatase 2A (PP2A). Inhibits catalytic activity of the PP2A(D) core complex in vitro. The PP2A(C):TIPRL complex does not show phosphatase activity. Acts as a negative regulator of serine/threonine-protein phosphatase 4 probably by inhibiting the formation of the active PPP4C:PPP4R2 complex; the function is proposed to implicate it in DNA damage response by promoting H2AX phosphorylated on Ser-140 (gamma-H2AX). May play a role in the regulation of ATM/ATR signaling pathway controlling DNA replication and repair. The chain is TIP41-like protein (Tiprl) from Mus musculus (Mouse).